Consider the following 860-residue polypeptide: DNA mismatch repair protein MutS (860 aa).

Residue 625–632 (GPNMGGKS) participates in ATP binding.

It belongs to the DNA mismatch repair MutS family.

Functionally, this protein is involved in the repair of mismatches in DNA. It is possible that it carries out the mismatch recognition step. This protein has a weak ATPase activity. The sequence is that of DNA mismatch repair protein MutS from Aeromonas hydrophila subsp. hydrophila (strain ATCC 7966 / DSM 30187 / BCRC 13018 / CCUG 14551 / JCM 1027 / KCTC 2358 / NCIMB 9240 / NCTC 8049).